The primary structure comprises 203 residues: Glycerol-3-phosphate acyltransferase (203 aa).

A run of 4 helical transmembrane segments spans residues 3–23 (LASALVLGAYLLGSVSTAILV), 75–95 (LGLEPVWIAAVALAAFLGHLF), 113–133 (VILGIQAWVGLAALATWLIVA), and 156–176 (LLTGERWYVAAGVLLAALIYW).

This sequence belongs to the PlsY family. As to quaternary structure, probably interacts with PlsX.

The protein resides in the cell inner membrane. It catalyses the reaction an acyl phosphate + sn-glycerol 3-phosphate = a 1-acyl-sn-glycero-3-phosphate + phosphate. The protein operates within lipid metabolism; phospholipid metabolism. Catalyzes the transfer of an acyl group from acyl-phosphate (acyl-PO(4)) to glycerol-3-phosphate (G3P) to form lysophosphatidic acid (LPA). This enzyme utilizes acyl-phosphate as fatty acyl donor, but not acyl-CoA or acyl-ACP. This Thioalkalivibrio sulfidiphilus (strain HL-EbGR7) protein is Glycerol-3-phosphate acyltransferase.